The chain runs to 457 residues: Siroheme synthase (457 aa).

Positions 1–204 (MDHLPIFCQL…NDQKAITETT (204 aa)) are precorrin-2 dehydrogenase /sirohydrochlorin ferrochelatase. NAD(+) is bound by residues 22–23 (DV) and 43–44 (LA). At Ser128 the chain carries Phosphoserine. Residues 216 to 457 (GEVVLVGAGP…RDKLNWFSNH (242 aa)) are uroporphyrinogen-III C-methyltransferase. Pro225 serves as a coordination point for S-adenosyl-L-methionine. Asp248 (proton acceptor) is an active-site residue. The active-site Proton donor is Lys270. S-adenosyl-L-methionine contacts are provided by residues 301–303 (GGD), Ile306, 331–332 (TA), Met382, and Gly411.

It in the N-terminal section; belongs to the precorrin-2 dehydrogenase / sirohydrochlorin ferrochelatase family. This sequence in the C-terminal section; belongs to the precorrin methyltransferase family.

The enzyme catalyses uroporphyrinogen III + 2 S-adenosyl-L-methionine = precorrin-2 + 2 S-adenosyl-L-homocysteine + H(+). It carries out the reaction precorrin-2 + NAD(+) = sirohydrochlorin + NADH + 2 H(+). The catalysed reaction is siroheme + 2 H(+) = sirohydrochlorin + Fe(2+). Its pathway is cofactor biosynthesis; adenosylcobalamin biosynthesis; precorrin-2 from uroporphyrinogen III: step 1/1. It participates in cofactor biosynthesis; adenosylcobalamin biosynthesis; sirohydrochlorin from precorrin-2: step 1/1. The protein operates within porphyrin-containing compound metabolism; siroheme biosynthesis; precorrin-2 from uroporphyrinogen III: step 1/1. It functions in the pathway porphyrin-containing compound metabolism; siroheme biosynthesis; siroheme from sirohydrochlorin: step 1/1. Its pathway is porphyrin-containing compound metabolism; siroheme biosynthesis; sirohydrochlorin from precorrin-2: step 1/1. Its function is as follows. Multifunctional enzyme that catalyzes the SAM-dependent methylations of uroporphyrinogen III at position C-2 and C-7 to form precorrin-2 via precorrin-1. Then it catalyzes the NAD-dependent ring dehydrogenation of precorrin-2 to yield sirohydrochlorin. Finally, it catalyzes the ferrochelation of sirohydrochlorin to yield siroheme. This chain is Siroheme synthase, found in Escherichia coli O17:K52:H18 (strain UMN026 / ExPEC).